The sequence spans 266 residues: Hydroxyethylthiazole kinase (266 aa).

Position 43 (Met43) interacts with substrate. Residues Arg119 and Thr166 each contribute to the ATP site. Position 193 (Gly193) interacts with substrate.

The protein belongs to the Thz kinase family. Requires Mg(2+) as cofactor.

The enzyme catalyses 5-(2-hydroxyethyl)-4-methylthiazole + ATP = 4-methyl-5-(2-phosphooxyethyl)-thiazole + ADP + H(+). It participates in cofactor biosynthesis; thiamine diphosphate biosynthesis; 4-methyl-5-(2-phosphoethyl)-thiazole from 5-(2-hydroxyethyl)-4-methylthiazole: step 1/1. Functionally, catalyzes the phosphorylation of the hydroxyl group of 4-methyl-5-beta-hydroxyethylthiazole (THZ). The sequence is that of Hydroxyethylthiazole kinase from Methanococcus maripaludis (strain DSM 14266 / JCM 13030 / NBRC 101832 / S2 / LL).